We begin with the raw amino-acid sequence, 705 residues long: Translation initiation factor IF-2 (705 aa).

Residues 40 to 124 form a disordered region; that stretch reads DDQIKALDKK…QPAAPKEIPS (85 aa). The span at 41 to 58 shows a compositional bias: basic and acidic residues; it reads DQIKALDKKFKKEQKNDN. Over residues 59-77 the composition is skewed to low complexity; sequence KQSTQNNHQKSNNQNQNKG. Residues 94–108 show a composition bias toward basic residues; it reads KGNKKNNRNNKKNNK. Residues 207-376 form the tr-type G domain; that stretch reads ERPAVVTIMG…GLVAEVQELK (170 aa). A G1 region spans residues 216-223; sequence GHVDHGKT. 216–223 is a GTP binding site; sequence GHVDHGKT. Positions 241–245 are G2; sequence GITQH. Positions 262-265 are G3; it reads DTPG. Residues 262–266 and 316–319 contribute to the GTP site; these read DTPGH and NKID. A G4 region spans residues 316 to 319; sequence NKID. The interval 352–354 is G5; the sequence is SAL.

Belongs to the TRAFAC class translation factor GTPase superfamily. Classic translation factor GTPase family. IF-2 subfamily.

It is found in the cytoplasm. In terms of biological role, one of the essential components for the initiation of protein synthesis. Protects formylmethionyl-tRNA from spontaneous hydrolysis and promotes its binding to the 30S ribosomal subunits. Also involved in the hydrolysis of GTP during the formation of the 70S ribosomal complex. This chain is Translation initiation factor IF-2, found in Staphylococcus aureus (strain MRSA252).